The chain runs to 150 residues: Sulfur-rich protein, serovars L1/L3 (150 aa).

Positions 1-20 (MSTVPVVQGAGSSNSAQDIS) are disordered. Transmembrane regions (helical) follow at residues 43–63 (VGLVVMGLLLVMATIFLVSAA) and 69–89 (IYLAIPAIVGCVNICVGILSM).

Its subcellular location is the membrane. This Chlamydia trachomatis protein is Sulfur-rich protein, serovars L1/L3 (srp).